Here is a 149-residue protein sequence, read N- to C-terminus: Transcriptional repressor NrdR (149 aa).

A zinc finger lies at Cys3 to Cys34. Residues Pro49–Glu139 enclose the ATP-cone domain.

This sequence belongs to the NrdR family. Zn(2+) is required as a cofactor.

In terms of biological role, negatively regulates transcription of bacterial ribonucleotide reductase nrd genes and operons by binding to NrdR-boxes. The protein is Transcriptional repressor NrdR of Tolumonas auensis (strain DSM 9187 / NBRC 110442 / TA 4).